We begin with the raw amino-acid sequence, 554 residues long: Hydroxylamine reductase (554 aa).

Cysteine 3, cysteine 6, cysteine 18, and cysteine 25 together coordinate [2Fe-2S] cluster. Residues histidine 252, glutamate 276, cysteine 320, cysteine 408, cysteine 436, cysteine 461, glutamate 495, and lysine 497 each contribute to the hybrid [4Fe-2O-2S] cluster site. The residue at position 408 (cysteine 408) is a Cysteine persulfide.

Belongs to the HCP family. The cofactor is [2Fe-2S] cluster. Hybrid [4Fe-2O-2S] cluster is required as a cofactor.

It is found in the cytoplasm. It carries out the reaction A + NH4(+) + H2O = hydroxylamine + AH2 + H(+). Its function is as follows. Catalyzes the reduction of hydroxylamine to form NH(3) and H(2)O. This Shewanella pealeana (strain ATCC 700345 / ANG-SQ1) protein is Hydroxylamine reductase.